We begin with the raw amino-acid sequence, 339 residues long: Methionine import ATP-binding protein MetN 1 (339 aa).

The ABC transporter domain maps to 2-241; it reads ISFNNVSKVY…PKTKTTQNFV (240 aa). 38–45 serves as a coordination point for ATP; the sequence is GFSGAGKS.

It belongs to the ABC transporter superfamily. Methionine importer (TC 3.A.1.24) family. The complex is composed of two ATP-binding proteins (MetN), two transmembrane proteins (MetI) and a solute-binding protein (MetQ).

Its subcellular location is the cell membrane. The catalysed reaction is L-methionine(out) + ATP + H2O = L-methionine(in) + ADP + phosphate + H(+). The enzyme catalyses D-methionine(out) + ATP + H2O = D-methionine(in) + ADP + phosphate + H(+). Its function is as follows. Part of the ABC transporter complex MetNIQ involved in methionine import. Responsible for energy coupling to the transport system. In Bacillus thuringiensis subsp. konkukian (strain 97-27), this protein is Methionine import ATP-binding protein MetN 1.